The sequence spans 123 residues: Potassium voltage-gated channel subfamily E member 2 (123 aa).

Residues Asn6 and Asn29 are each glycosylated (N-linked (GlcNAc...) asparagine). Residues 49–69 form a helical membrane-spanning segment; it reads VILYLMVMIGMFSFIVVAILV. Residues 70–123 lie on the Cytoplasmic side of the membrane; that stretch reads STVKSKRREHSQHPYHQYIVEDWQEKYKSQILHLEDSKATIHENMGATGFTVSP.

The protein belongs to the potassium channel KCNE family. In terms of assembly, interacts with KCNB1. Associates with KCNH2/ERG1. May associate with KCNQ2 and KCNQ3. Associates with HCN1 and probably HCN2. Heteromultimer with KCNC2. Interacts with KCNC2. Interacts with KCNQ1. Forms a heterooligomer complex with KCNQ1 that targets to the membrane raft and leading to currents with an apparently instantaneous activation, a rapid deactivation process and a linear current-voltage relationship and decreases the amplitude of the outward current.

The protein resides in the cell membrane. It is found in the apical cell membrane. Functionally, ancillary protein that functions as a regulatory subunit of the voltage-gated potassium (Kv) channel complex composed of pore-forming and potassium-conducting alpha subunits and of regulatory beta subunits. KCNE2 beta subunit modulates the gating kinetics and enhances stability of the channel complex. Alters the gating of the delayed rectifier Kv channel containing KCNB1 alpha subunit. Associates with KCNH2/HERG alpha subunit Kv channel to form the rapidly activating component of the delayed rectifying potassium current (IKr) in heart. May associate with KCNQ2 and/or KCNQ3 alpha subunits to modulate the native M-type current. May associate with HCN1 and HCN2 channel subunits to increase potassium current. Forms a heterooligomer complex with KCNQ1/KVLQT1 alpha subunits which leads to currents with an apparently instantaneous activation, a rapid deactivation process and a linear current-voltage relationship and decreases the amplitude of the outward current. KCNQ1-KCNE2 channel associates with Na(+)-coupled myo-inositol symporter in the apical membrane of choroid plexus epithelium and regulates the myo-inositol gradient between blood and cerebrospinal fluid with an impact on neuron excitability. This Mus musculus (Mouse) protein is Potassium voltage-gated channel subfamily E member 2.